The chain runs to 426 residues: Zinc finger protein 662 (426 aa).

Residues 1 to 44 (MLENYGAVASLAAFPFPKPALISQLERGETPWCSVPRGALDGEA) enclose the KRAB domain. 8 consecutive C2H2-type zinc fingers follow at residues 192 to 214 (YICE…QKTH), 220 to 242 (YGCK…QRIH), 248 to 270 (YECQ…QRIH), 276 to 298 (FECK…QRIH), 304 to 326 (YTCK…QRMH), 332 to 354 (YECK…QRVH), 360 to 382 (HECT…QRIH), and 388 to 410 (YKCN…QRRH).

This sequence belongs to the krueppel C2H2-type zinc-finger protein family.

The protein resides in the nucleus. May be involved in transcriptional regulation. In Homo sapiens (Human), this protein is Zinc finger protein 662 (ZNF662).